A 512-amino-acid polypeptide reads, in one-letter code: Lysine--tRNA ligase (512 aa).

Mg(2+) is bound by residues Glu408 and Glu415.

The protein belongs to the class-II aminoacyl-tRNA synthetase family. In terms of assembly, homodimer. It depends on Mg(2+) as a cofactor.

It is found in the cytoplasm. The enzyme catalyses tRNA(Lys) + L-lysine + ATP = L-lysyl-tRNA(Lys) + AMP + diphosphate. This chain is Lysine--tRNA ligase, found in Prochlorococcus marinus (strain MIT 9312).